Consider the following 295-residue polypeptide: 4-diphosphocytidyl-2-C-methyl-D-erythritol kinase (295 aa).

Residue Lys-15 is part of the active site. 101-111 (PIAAGLGGGSS) serves as a coordination point for ATP. Asp-143 is a catalytic residue.

The protein belongs to the GHMP kinase family. IspE subfamily.

It carries out the reaction 4-CDP-2-C-methyl-D-erythritol + ATP = 4-CDP-2-C-methyl-D-erythritol 2-phosphate + ADP + H(+). Its pathway is isoprenoid biosynthesis; isopentenyl diphosphate biosynthesis via DXP pathway; isopentenyl diphosphate from 1-deoxy-D-xylulose 5-phosphate: step 3/6. Functionally, catalyzes the phosphorylation of the position 2 hydroxy group of 4-diphosphocytidyl-2C-methyl-D-erythritol. The protein is 4-diphosphocytidyl-2-C-methyl-D-erythritol kinase of Caulobacter vibrioides (strain ATCC 19089 / CIP 103742 / CB 15) (Caulobacter crescentus).